Reading from the N-terminus, the 814-residue chain is Acyl-coenzyme A dehydrogenase (814 aa).

Glu-497 functions as the Proton acceptor in the catalytic mechanism.

This sequence belongs to the acyl-CoA dehydrogenase family. It depends on FAD as a cofactor.

It catalyses the reaction a medium-chain 2,3-saturated fatty acyl-CoA + oxidized [electron-transfer flavoprotein] + H(+) = a medium-chain (2E)-enoyl-CoA + reduced [electron-transfer flavoprotein]. It carries out the reaction a long-chain 2,3-saturated fatty acyl-CoA + oxidized [electron-transfer flavoprotein] + H(+) = a long-chain (2E)-enoyl-CoA + reduced [electron-transfer flavoprotein]. Its pathway is lipid metabolism; fatty acid beta-oxidation. In terms of biological role, catalyzes the dehydrogenation of acyl-coenzymes A (acyl-CoAs) to 2-enoyl-CoAs, the first step of the beta-oxidation cycle of fatty acid degradation. Is required for S.typhimurium to utilize medium- and long-chain fatty acids as sole carbon sources for growth. Is needed for bacterial survival during carbone-source starvation. This is Acyl-coenzyme A dehydrogenase (fadE) from Salmonella typhimurium (strain LT2 / SGSC1412 / ATCC 700720).